The sequence spans 250 residues: Phosphatidylglycerol--prolipoprotein diacylglyceryl transferase (250 aa).

4 consecutive transmembrane segments (helical) span residues 11–31 (LAIRWYGVIISIGAALGLLLA), 49–69 (FLIAFPSAIIGARLYYVIFEF), 84–104 (QGGLAIHGGIIFGVLAVYIYL), and 109–129 (ESFFEYVDVAAPSIILGQAIG). Residue arginine 130 participates in a 1,2-diacyl-sn-glycero-3-phospho-(1'-sn-glycerol) binding. A run of 3 helical transmembrane segments spans residues 169–189 (PTFLYESIWNFIVCIFLVYLL), 196–216 (GIVFMAYIGLYSLGRFFIEGL), and 228–248 (VAQLISVLGIILSIFFIYNII).

This sequence belongs to the Lgt family.

The protein resides in the cell membrane. The enzyme catalyses L-cysteinyl-[prolipoprotein] + a 1,2-diacyl-sn-glycero-3-phospho-(1'-sn-glycerol) = an S-1,2-diacyl-sn-glyceryl-L-cysteinyl-[prolipoprotein] + sn-glycerol 1-phosphate + H(+). Its pathway is protein modification; lipoprotein biosynthesis (diacylglyceryl transfer). Catalyzes the transfer of the diacylglyceryl group from phosphatidylglycerol to the sulfhydryl group of the N-terminal cysteine of a prolipoprotein, the first step in the formation of mature lipoproteins. This Clostridium botulinum (strain 657 / Type Ba4) protein is Phosphatidylglycerol--prolipoprotein diacylglyceryl transferase.